The following is a 494-amino-acid chain: Membrane-bound lytic murein transglycosylase F (494 aa).

Residues 1–20 (MIKYLYVILLGLLLSGCQPA) form the signal peptide. The non-LT domain stretch occupies residues 21 to 259 (EVVEIEASPK…HLNEKYFGHV (239 aa)). Residues 260–494 (KRFDYVDTRA…LKPKLGAGQP (235 aa)) are LT domain. Glu304 is an active-site residue. Residues 473–485 (QSLASDSKTNNTL) show a composition bias toward polar residues. A disordered region spans residues 473–494 (QSLASDSKTNNTLKPKLGAGQP).

The protein in the N-terminal section; belongs to the bacterial solute-binding protein 3 family. In the C-terminal section; belongs to the transglycosylase Slt family.

Its subcellular location is the cell outer membrane. The catalysed reaction is Exolytic cleavage of the (1-&gt;4)-beta-glycosidic linkage between N-acetylmuramic acid (MurNAc) and N-acetylglucosamine (GlcNAc) residues in peptidoglycan, from either the reducing or the non-reducing ends of the peptidoglycan chains, with concomitant formation of a 1,6-anhydrobond in the MurNAc residue.. In terms of biological role, murein-degrading enzyme that degrades murein glycan strands and insoluble, high-molecular weight murein sacculi, with the concomitant formation of a 1,6-anhydromuramoyl product. Lytic transglycosylases (LTs) play an integral role in the metabolism of the peptidoglycan (PG) sacculus. Their lytic action creates space within the PG sacculus to allow for its expansion as well as for the insertion of various structures such as secretion systems and flagella. The polypeptide is Membrane-bound lytic murein transglycosylase F (Shewanella denitrificans (strain OS217 / ATCC BAA-1090 / DSM 15013)).